The chain runs to 193 residues: dTTP/UTP pyrophosphatase (193 aa).

The active-site Proton acceptor is D73.

This sequence belongs to the Maf family. YhdE subfamily. A divalent metal cation serves as cofactor.

The protein resides in the cytoplasm. It carries out the reaction dTTP + H2O = dTMP + diphosphate + H(+). The enzyme catalyses UTP + H2O = UMP + diphosphate + H(+). Nucleoside triphosphate pyrophosphatase that hydrolyzes dTTP and UTP. May have a dual role in cell division arrest and in preventing the incorporation of modified nucleotides into cellular nucleic acids. This chain is dTTP/UTP pyrophosphatase, found in Caulobacter vibrioides (strain ATCC 19089 / CIP 103742 / CB 15) (Caulobacter crescentus).